We begin with the raw amino-acid sequence, 307 residues long: D-alanine--D-alanine ligase (307 aa).

One can recognise an ATP-grasp domain in the interval R101–D301. Residue L128–T182 coordinates ATP. D251, E268, and N270 together coordinate Mg(2+).

The protein belongs to the D-alanine--D-alanine ligase family. Mg(2+) serves as cofactor. Requires Mn(2+) as cofactor.

The protein resides in the cytoplasm. The enzyme catalyses 2 D-alanine + ATP = D-alanyl-D-alanine + ADP + phosphate + H(+). It participates in cell wall biogenesis; peptidoglycan biosynthesis. Its function is as follows. Cell wall formation. The protein is D-alanine--D-alanine ligase of Beijerinckia indica subsp. indica (strain ATCC 9039 / DSM 1715 / NCIMB 8712).